A 230-amino-acid chain; its full sequence is Ribonuclease 3 (230 aa).

The RNase III domain occupies 6–135; sequence VSELRARYGI…FNGALFLDQG (130 aa). Glu48 lines the Mg(2+) pocket. Asp52 is an active-site residue. Positions 121 and 124 each coordinate Mg(2+). Residue Glu124 is part of the active site. A DRBM domain is found at 161-230; the sequence is DYKTNLQEFL…AKKALEQLKA (70 aa).

It belongs to the ribonuclease III family. Homodimer. Mg(2+) serves as cofactor.

The protein resides in the cytoplasm. It carries out the reaction Endonucleolytic cleavage to 5'-phosphomonoester.. Functionally, digests double-stranded RNA. Involved in the processing of primary rRNA transcript to yield the immediate precursors to the large and small rRNAs (23S and 16S). Processes some mRNAs, and tRNAs when they are encoded in the rRNA operon. Processes pre-crRNA and tracrRNA of type II CRISPR loci if present in the organism. The polypeptide is Ribonuclease 3 (Latilactobacillus sakei subsp. sakei (strain 23K) (Lactobacillus sakei subsp. sakei)).